The following is a 339-amino-acid chain: 4-hydroxy-2-oxovalerate aldolase (339 aa).

Residues 7 to 257 (IRIMDTTLRD…QVGVDLYKIM (251 aa)) form the Pyruvate carboxyltransferase domain. 15–16 (RD) contributes to the substrate binding site. Position 16 (Asp-16) interacts with Mn(2+). His-19 (proton acceptor) is an active-site residue. 2 residues coordinate substrate: Ser-169 and His-196. Mn(2+) contacts are provided by His-196 and His-198. Tyr-286 serves as a coordination point for substrate.

The protein belongs to the 4-hydroxy-2-oxovalerate aldolase family.

It carries out the reaction (S)-4-hydroxy-2-oxopentanoate = acetaldehyde + pyruvate. The sequence is that of 4-hydroxy-2-oxovalerate aldolase from Pelotomaculum thermopropionicum (strain DSM 13744 / JCM 10971 / SI).